The sequence spans 416 residues: MHDLVIRNGLCFINGEFVECSVGVDGNRITHVAKEVERGEIEIDAAGCLVMPGCFNAHTHAAMTLLRGYAEGLPLREWLEKVWEVEARLDEDAVYWGTMLACVEMLKSGVTAFADMYIHMDAVAEAVGESGMRAVLGYGMADRGDEERARKELEIGLEFAEKWNGGFEGRVTTMLAPHAPYTCSPEFLKVVSDASKDKGFLKHIHVSETLWEVKEVRERYGKRPVEFLDSIGFLDSSTVLAHAVWLSEAEMKILAERGVSVAHCPTSNLKLSSGIAKVSELLEMGVNVGIGTDGAASNNMLSVLSDARVGALLQNLRGRTLKPGHWLEMATEGGYRAYNLKGGRIEEGYLADIVVFSKTCRNAPMHDPAAMLYVENQALHAVVDGVLVMEDGILVNVEEEKVIEKAEETALELVGG.

Residues His-58 and His-60 each coordinate Zn(2+). The substrate site is built by Glu-86 and His-178. His-205 is a binding site for Zn(2+). Substrate-binding residues include Glu-208 and Asp-293. Asp-293 serves as a coordination point for Zn(2+).

The protein belongs to the metallo-dependent hydrolases superfamily. MTA/SAH deaminase family. The cofactor is Zn(2+).

The catalysed reaction is S-adenosyl-L-homocysteine + H2O + H(+) = S-inosyl-L-homocysteine + NH4(+). It catalyses the reaction S-methyl-5'-thioadenosine + H2O + H(+) = S-methyl-5'-thioinosine + NH4(+). Its function is as follows. Catalyzes the deamination of 5-methylthioadenosine and S-adenosyl-L-homocysteine into 5-methylthioinosine and S-inosyl-L-homocysteine, respectively. Is also able to deaminate adenosine. The chain is 5-methylthioadenosine/S-adenosylhomocysteine deaminase 2 from Archaeoglobus fulgidus (strain ATCC 49558 / DSM 4304 / JCM 9628 / NBRC 100126 / VC-16).